Here is an 82-residue protein sequence, read N- to C-terminus: Sec-independent protein translocase protein TatA (82 aa).

Residues 1–21 traverse the membrane as a helical segment; that stretch reads MGSFSIWHWLIVLLIVVMVFG. The disordered stretch occupies residues 46–82; that stretch reads GASTDDSATTSAPAGQVTNNSTAADKTTIDVEAKHKS. The segment covering 49 to 70 has biased composition (polar residues); it reads TDDSATTSAPAGQVTNNSTAAD. Residues 72-82 are compositionally biased toward basic and acidic residues; the sequence is TTIDVEAKHKS.

It belongs to the TatA/E family. The Tat system comprises two distinct complexes: a TatABC complex, containing multiple copies of TatA, TatB and TatC subunits, and a separate TatA complex, containing only TatA subunits. Substrates initially bind to the TatABC complex, which probably triggers association of the separate TatA complex to form the active translocon.

It is found in the cell inner membrane. Its function is as follows. Part of the twin-arginine translocation (Tat) system that transports large folded proteins containing a characteristic twin-arginine motif in their signal peptide across membranes. TatA could form the protein-conducting channel of the Tat system. The polypeptide is Sec-independent protein translocase protein TatA (Acidovorax sp. (strain JS42)).